We begin with the raw amino-acid sequence, 474 residues long: Iroquois-class homeodomain protein IRX-2 (474 aa).

The homeobox; TALE-type DNA-binding region spans 115-177 (DPAYRKNATR…NARRRLKKEN (63 aa)). Disordered regions lie at residues 177-220 (NKMT…EDEG), 262-373 (EDLE…PGGS), and 420-461 (PGET…DTSE). Phosphoserine is present on Ser187. A compositionally biased stretch (basic and acidic residues) spans 196-210 (DASRSKEESSDKAQD). The span at 262-275 (EDLEDEEDEEDECE) shows a compositional bias: acidic residues. Composition is skewed to low complexity over residues 293–305 (EAPL…EAAP) and 358–373 (PAAA…PGGS).

The protein belongs to the TALE/IRO homeobox family. In terms of tissue distribution, expressed in specific and overlapping patterns with Irx1 and Irx3 in the developing and adult metanephric kidney. In the adult metanephros, renal expression is found in the loop of Henle in the S3 proximal tubule segment and in the thick ascending limb (TAL) of the distal tubule.

It is found in the nucleus. This is Iroquois-class homeodomain protein IRX-2 (Irx2) from Mus musculus (Mouse).